The sequence spans 404 residues: Probable tRNA sulfurtransferase (404 aa).

The THUMP domain maps to glutamine 60 to glutamate 165. Residues methionine 183 to leucine 184, histidine 208 to phenylalanine 209, arginine 265, glycine 287, and glutamine 296 contribute to the ATP site.

Belongs to the ThiI family.

The protein localises to the cytoplasm. It carries out the reaction [ThiI sulfur-carrier protein]-S-sulfanyl-L-cysteine + a uridine in tRNA + 2 reduced [2Fe-2S]-[ferredoxin] + ATP + H(+) = [ThiI sulfur-carrier protein]-L-cysteine + a 4-thiouridine in tRNA + 2 oxidized [2Fe-2S]-[ferredoxin] + AMP + diphosphate. The catalysed reaction is [ThiS sulfur-carrier protein]-C-terminal Gly-Gly-AMP + S-sulfanyl-L-cysteinyl-[cysteine desulfurase] + AH2 = [ThiS sulfur-carrier protein]-C-terminal-Gly-aminoethanethioate + L-cysteinyl-[cysteine desulfurase] + A + AMP + 2 H(+). Its pathway is cofactor biosynthesis; thiamine diphosphate biosynthesis. Its function is as follows. Catalyzes the ATP-dependent transfer of a sulfur to tRNA to produce 4-thiouridine in position 8 of tRNAs, which functions as a near-UV photosensor. Also catalyzes the transfer of sulfur to the sulfur carrier protein ThiS, forming ThiS-thiocarboxylate. This is a step in the synthesis of thiazole, in the thiamine biosynthesis pathway. The sulfur is donated as persulfide by IscS. The chain is Probable tRNA sulfurtransferase from Streptococcus pyogenes serotype M12 (strain MGAS2096).